The sequence spans 568 residues: Proline--tRNA ligase (568 aa).

The protein belongs to the class-II aminoacyl-tRNA synthetase family. ProS type 1 subfamily. In terms of assembly, homodimer.

It is found in the cytoplasm. The enzyme catalyses tRNA(Pro) + L-proline + ATP = L-prolyl-tRNA(Pro) + AMP + diphosphate. In terms of biological role, catalyzes the attachment of proline to tRNA(Pro) in a two-step reaction: proline is first activated by ATP to form Pro-AMP and then transferred to the acceptor end of tRNA(Pro). As ProRS can inadvertently accommodate and process non-cognate amino acids such as alanine and cysteine, to avoid such errors it has two additional distinct editing activities against alanine. One activity is designated as 'pretransfer' editing and involves the tRNA(Pro)-independent hydrolysis of activated Ala-AMP. The other activity is designated 'posttransfer' editing and involves deacylation of mischarged Ala-tRNA(Pro). The misacylated Cys-tRNA(Pro) is not edited by ProRS. This chain is Proline--tRNA ligase, found in Nitrosomonas eutropha (strain DSM 101675 / C91 / Nm57).